Here is a 226-residue protein sequence, read N- to C-terminus: ATP-dependent Clp protease proteolytic subunit 2 (226 aa).

Catalysis depends on S118, which acts as the Nucleophile. H143 is an active-site residue.

This sequence belongs to the peptidase S14 family. In terms of assembly, fourteen ClpP subunits assemble into 2 heptameric rings which stack back to back to give a disk-like structure with a central cavity, resembling the structure of eukaryotic proteasomes.

The protein localises to the cytoplasm. The catalysed reaction is Hydrolysis of proteins to small peptides in the presence of ATP and magnesium. alpha-casein is the usual test substrate. In the absence of ATP, only oligopeptides shorter than five residues are hydrolyzed (such as succinyl-Leu-Tyr-|-NHMec, and Leu-Tyr-Leu-|-Tyr-Trp, in which cleavage of the -Tyr-|-Leu- and -Tyr-|-Trp bonds also occurs).. In terms of biological role, cleaves peptides in various proteins in a process that requires ATP hydrolysis. Has a chymotrypsin-like activity. Plays a major role in the degradation of misfolded proteins. The chain is ATP-dependent Clp protease proteolytic subunit 2 from Synechocystis sp. (strain ATCC 27184 / PCC 6803 / Kazusa).